The sequence spans 253 residues: Uridylate kinase (253 aa).

26–29 contributes to the ATP binding site; sequence KLSG. Residue glycine 68 participates in UMP binding. ATP is bound by residues glycine 69 and arginine 73. UMP contacts are provided by residues aspartate 88 and 149-156; that span reads TGNPFFTT. The ATP site is built by threonine 176, tyrosine 182, and aspartate 185.

The protein belongs to the UMP kinase family. As to quaternary structure, homohexamer.

It is found in the cytoplasm. The catalysed reaction is UMP + ATP = UDP + ADP. It functions in the pathway pyrimidine metabolism; CTP biosynthesis via de novo pathway; UDP from UMP (UMPK route): step 1/1. With respect to regulation, inhibited by UTP. Catalyzes the reversible phosphorylation of UMP to UDP. The chain is Uridylate kinase from Chromohalobacter salexigens (strain ATCC BAA-138 / DSM 3043 / CIP 106854 / NCIMB 13768 / 1H11).